A 220-amino-acid chain; its full sequence is uncharacterized protein (220 aa).

This is an uncharacterized protein from Acidianus two-tailed virus (ATV).